The sequence spans 348 residues: UPF0283 membrane protein PBPRA2435 (348 aa).

The next 3 membrane-spanning stretches (helical) occupy residues 71-91 (GLLI…VVSA), 97-117 (WLAL…ITAL), and 211-231 (EAAV…LVAW).

Belongs to the UPF0283 family.

Its subcellular location is the cell inner membrane. The sequence is that of UPF0283 membrane protein PBPRA2435 from Photobacterium profundum (strain SS9).